Reading from the N-terminus, the 207-residue chain is Small ribosomal subunit protein uS4 (207 aa).

The span at 31-40 (KCRLDNKPGQ) shows a compositional bias: basic and acidic residues. Residues 31-56 (KCRLDNKPGQDGRTSGSRTSDYGNQL) are disordered. Over residues 42–53 (GRTSGSRTSDYG) the composition is skewed to polar residues. The S4 RNA-binding domain maps to 97 to 158 (SRLDNVVYRM…KAKKQARITE (62 aa)).

It belongs to the universal ribosomal protein uS4 family. In terms of assembly, part of the 30S ribosomal subunit. Contacts protein S5. The interaction surface between S4 and S5 is involved in control of translational fidelity.

In terms of biological role, one of the primary rRNA binding proteins, it binds directly to 16S rRNA where it nucleates assembly of the body of the 30S subunit. Its function is as follows. With S5 and S12 plays an important role in translational accuracy. This chain is Small ribosomal subunit protein uS4, found in Polynucleobacter necessarius subsp. necessarius (strain STIR1).